The sequence spans 293 residues: Shikimate dehydrogenase (NADP(+)) (293 aa).

Residues 20-22 (SLT) and T72 each bind shikimate. The Proton acceptor role is filled by K76. Shikimate contacts are provided by N97 and D112. NADP(+) is bound by residues 136-140 (GAGGA) and I230. Y232 lines the shikimate pocket. An NADP(+)-binding site is contributed by G253.

The protein belongs to the shikimate dehydrogenase family. As to quaternary structure, homodimer.

It carries out the reaction shikimate + NADP(+) = 3-dehydroshikimate + NADPH + H(+). It participates in metabolic intermediate biosynthesis; chorismate biosynthesis; chorismate from D-erythrose 4-phosphate and phosphoenolpyruvate: step 4/7. Functionally, involved in the biosynthesis of the chorismate, which leads to the biosynthesis of aromatic amino acids. Catalyzes the reversible NADPH linked reduction of 3-dehydroshikimate (DHSA) to yield shikimate (SA). This Pseudarthrobacter chlorophenolicus (strain ATCC 700700 / DSM 12829 / CIP 107037 / JCM 12360 / KCTC 9906 / NCIMB 13794 / A6) (Arthrobacter chlorophenolicus) protein is Shikimate dehydrogenase (NADP(+)).